The chain runs to 188 residues: Elongation factor P-like protein (188 aa).

The protein belongs to the elongation factor P family.

This is Elongation factor P-like protein from Xylella fastidiosa (strain M23).